Reading from the N-terminus, the 599-residue chain is Elongation factor 4 (599 aa).

Residues 4–186 form the tr-type G domain; the sequence is ENIRNFSIIA…EIVKKIPPPE (183 aa). GTP contacts are provided by residues 16–21 and 133–136; these read DHGKST and NKID.

Belongs to the TRAFAC class translation factor GTPase superfamily. Classic translation factor GTPase family. LepA subfamily.

It is found in the cell inner membrane. The catalysed reaction is GTP + H2O = GDP + phosphate + H(+). Required for accurate and efficient protein synthesis under certain stress conditions. May act as a fidelity factor of the translation reaction, by catalyzing a one-codon backward translocation of tRNAs on improperly translocated ribosomes. Back-translocation proceeds from a post-translocation (POST) complex to a pre-translocation (PRE) complex, thus giving elongation factor G a second chance to translocate the tRNAs correctly. Binds to ribosomes in a GTP-dependent manner. The protein is Elongation factor 4 of Geobacter metallireducens (strain ATCC 53774 / DSM 7210 / GS-15).